Here is a 251-residue protein sequence, read N- to C-terminus: Pyridoxine 5'-phosphate synthase (251 aa).

N7 provides a ligand contact to 3-amino-2-oxopropyl phosphate. 9 to 10 (DH) is a 1-deoxy-D-xylulose 5-phosphate binding site. 3-amino-2-oxopropyl phosphate is bound at residue R18. H43 serves as the catalytic Proton acceptor. Residues R45 and H50 each coordinate 1-deoxy-D-xylulose 5-phosphate. E70 acts as the Proton acceptor in catalysis. T100 is a 1-deoxy-D-xylulose 5-phosphate binding site. H198 functions as the Proton donor in the catalytic mechanism. Residues A199 and 220–221 (GH) contribute to the 3-amino-2-oxopropyl phosphate site.

It belongs to the PNP synthase family. In terms of assembly, homooctamer; tetramer of dimers.

The protein resides in the cytoplasm. It catalyses the reaction 3-amino-2-oxopropyl phosphate + 1-deoxy-D-xylulose 5-phosphate = pyridoxine 5'-phosphate + phosphate + 2 H2O + H(+). It functions in the pathway cofactor biosynthesis; pyridoxine 5'-phosphate biosynthesis; pyridoxine 5'-phosphate from D-erythrose 4-phosphate: step 5/5. Catalyzes the complicated ring closure reaction between the two acyclic compounds 1-deoxy-D-xylulose-5-phosphate (DXP) and 3-amino-2-oxopropyl phosphate (1-amino-acetone-3-phosphate or AAP) to form pyridoxine 5'-phosphate (PNP) and inorganic phosphate. The polypeptide is Pyridoxine 5'-phosphate synthase (Aromatoleum aromaticum (strain DSM 19018 / LMG 30748 / EbN1) (Azoarcus sp. (strain EbN1))).